Consider the following 44-residue polypeptide: F420-non-reducing hydrogenase vhu subunit U (44 aa).

The Ni(2+) site is built by Sec20 and Cys23. Sec20 is a non-standard amino acid (selenocysteine). The propeptide at 27–44 is removed in mature form; sequence MIVEDAEGNVVFEIVNDE.

Belongs to the [NiFe]/[NiFeSe] hydrogenase large subunit family. The F420-non-reducing hydrogenase vhu is composed of four subunits; VhuA, VhuD, VhuG and VhuU. It depends on Ni(2+) as a cofactor.

In Methanococcus voltae, this protein is F420-non-reducing hydrogenase vhu subunit U (vhuU).